A 499-amino-acid chain; its full sequence is Kynurenine 3-monooxygenase 3 (499 aa).

The protein belongs to the aromatic-ring hydroxylase family. KMO subfamily. It depends on FAD as a cofactor.

The protein localises to the mitochondrion outer membrane. It catalyses the reaction L-kynurenine + NADPH + O2 + H(+) = 3-hydroxy-L-kynurenine + NADP(+) + H2O. Its pathway is cofactor biosynthesis; NAD(+) biosynthesis; quinolinate from L-kynurenine: step 1/3. Functionally, catalyzes the hydroxylation of L-kynurenine (L-Kyn) to form 3-hydroxy-L-kynurenine (L-3OHKyn). Required for synthesis of quinolinic acid. This is Kynurenine 3-monooxygenase 3 (bna4-3) from Aspergillus niger (strain ATCC MYA-4892 / CBS 513.88 / FGSC A1513).